The following is a 214-amino-acid chain: Pyridoxine/pyridoxamine 5'-phosphate oxidase (214 aa).

Substrate contacts are provided by residues 9–12 (RKDY) and lysine 67. Residues 62–67 (RMVLLK), 77–78 (FT), arginine 83, lysine 84, and glutamine 106 each bind FMN. Tyrosine 124, arginine 128, and serine 132 together coordinate substrate. Residues 141 to 142 (QS) and tryptophan 186 each bind FMN. A substrate-binding site is contributed by 192 to 194 (RLH). Arginine 196 is an FMN binding site.

This sequence belongs to the pyridoxamine 5'-phosphate oxidase family. As to quaternary structure, homodimer. FMN is required as a cofactor.

It carries out the reaction pyridoxamine 5'-phosphate + O2 + H2O = pyridoxal 5'-phosphate + H2O2 + NH4(+). The enzyme catalyses pyridoxine 5'-phosphate + O2 = pyridoxal 5'-phosphate + H2O2. The protein operates within cofactor metabolism; pyridoxal 5'-phosphate salvage; pyridoxal 5'-phosphate from pyridoxamine 5'-phosphate: step 1/1. Its pathway is cofactor metabolism; pyridoxal 5'-phosphate salvage; pyridoxal 5'-phosphate from pyridoxine 5'-phosphate: step 1/1. Its function is as follows. Catalyzes the oxidation of either pyridoxine 5'-phosphate (PNP) or pyridoxamine 5'-phosphate (PMP) into pyridoxal 5'-phosphate (PLP). The chain is Pyridoxine/pyridoxamine 5'-phosphate oxidase from Nostoc punctiforme (strain ATCC 29133 / PCC 73102).